The following is a 165-amino-acid chain: Cyanate hydratase (165 aa).

Residues Arg106, Glu109, and Ser132 contribute to the active site.

The protein belongs to the cyanase family.

The enzyme catalyses cyanate + hydrogencarbonate + 3 H(+) = NH4(+) + 2 CO2. Its function is as follows. Catalyzes the reaction of cyanate with bicarbonate to produce ammonia and carbon dioxide. In Laccaria bicolor (strain S238N-H82 / ATCC MYA-4686) (Bicoloured deceiver), this protein is Cyanate hydratase.